Reading from the N-terminus, the 867-residue chain is Cadherin-related family member 1 (867 aa).

An N-terminal signal peptide occupies residues Met-1–Ser-21. At Val-22–Gly-707 the chain is on the extracellular side. 6 Cadherin domains span residues Asn-39–Phe-138, Leu-139–Phe-250, Val-251–Phe-357, Pro-363–Phe-476, Ser-477–Phe-580, and Asp-572–Ala-692. Residues Val-708–Phe-728 form a helical membrane-spanning segment. Residues Trp-729–Tyr-867 are Cytoplasmic-facing. The tract at residues Glu-777–Gly-825 is disordered. Residues Pro-795–Leu-809 show a composition bias toward pro residues.

Expressed in photoreceptor cells of the outer nuclear layer of the retina and in the pinal gland.

Its subcellular location is the membrane. Its function is as follows. Potential calcium-dependent cell-adhesion protein. The sequence is that of Cadherin-related family member 1 (cdhr1) from Xenopus laevis (African clawed frog).